Reading from the N-terminus, the 503-residue chain is Cytochrome P450 monooxygenase ecdH (503 aa).

A helical membrane pass occupies residues 8 to 24 (TTLLCGVISSTLLLLLL). N-linked (GlcNAc...) asparagine glycans are attached at residues Asn64, Asn324, and Asn413. Cys449 serves as a coordination point for heme.

The protein belongs to the cytochrome P450 family. Heme serves as cofactor.

Its subcellular location is the membrane. Its pathway is antifungal biosynthesis. Its function is as follows. Cytochrome P450 monooxygenase; part of the gene cluster that mediates the biosynthesis of echinocandin B, a fungal lipidated cyclic hexapeptide that acts as an antifungal agent. Linoleoyl-AMP, produced by the fatty-acyl-AMP ligase ecdI, is transferred to the initiation carrier domain (T0) of ecdA. The linoleoyl-S-phosphopantetheinyl-T0 is sequentially extended with L-ornithine, L-threonine, L-proline, L-homotyrosine, L-threonine, and 4R-methyl-L-proline to form the linear hexapeptide. Thereafter, the terminal condensation (C7) performs macrocyclization of the NRPS product and the cyclic scaffold is released from ecdA. All six of the amino acid residues are hydroxylated, including 4R,5R-dihydroxy-L-ornithine, 4R-hydroxyl-L-proline, 3S,4S-dihydroxy-L-homotyrosine, and 3S-hydroxyl-4S-methyl-L-prolin. In the pathway, all the hydroxylation reactions are proposed to occur following completion of the cyclic peptide, so the unhydroxylated precursor produced by ecdA will undergo six rounds of hydroxylation. Five hydroxylase genes (ecdG, ecdH, ecdK, htyE and htyF) are embedded within the echinocandin B (ecd) and L-homotyrosine (hty) clusters. The sequence is that of Cytochrome P450 monooxygenase ecdH from Aspergillus rugulosus (Emericella rugulosa).